The sequence spans 40 residues: Dolichyl-diphosphooligosaccharide--protein glycosyltransferase subunit 4 (40 aa).

The Lumenal segment spans residues 1–4 (MITD). Residues 5 to 25 (VQLAIFSNVLGVFLFLLVVAY) traverse the membrane as a helical segment. Residues 26–40 (HYINANTGKPIPKAK) are Cytoplasmic-facing.

This sequence belongs to the OST4 family. Component of the oligosaccharyltransferase (OST) complex.

It localises to the endoplasmic reticulum membrane. Its function is as follows. Subunit of the oligosaccharyl transferase (OST) complex that catalyzes the initial transfer of a defined glycan (Glc(3)Man(9)GlcNAc(2) in eukaryotes) from the lipid carrier dolichol-pyrophosphate to an asparagine residue within an Asn-X-Ser/Thr consensus motif in nascent polypeptide chains, the first step in protein N-glycosylation. N-glycosylation occurs cotranslationally and the complex associates with the Sec61 complex at the channel-forming translocon complex that mediates protein translocation across the endoplasmic reticulum (ER). All subunits are required for a maximal enzyme activity. The sequence is that of Dolichyl-diphosphooligosaccharide--protein glycosyltransferase subunit 4 from Drosophila ananassae (Fruit fly).